The following is a 449-amino-acid chain: Trigger factor (449 aa).

The region spanning glycine 172 to glutamine 257 is the PPIase FKBP-type domain.

This sequence belongs to the FKBP-type PPIase family. Tig subfamily.

It localises to the cytoplasm. It carries out the reaction [protein]-peptidylproline (omega=180) = [protein]-peptidylproline (omega=0). Its function is as follows. Involved in protein export. Acts as a chaperone by maintaining the newly synthesized protein in an open conformation. Functions as a peptidyl-prolyl cis-trans isomerase. The protein is Trigger factor of Ureaplasma parvum serovar 3 (strain ATCC 27815 / 27 / NCTC 11736).